Reading from the N-terminus, the 237-residue chain is Uridylate kinase (237 aa).

An ATP-binding site is contributed by 12 to 15; the sequence is KLSG. The segment at 20 to 25 is involved in allosteric activation by GTP; sequence GENGFG. UMP is bound at residue glycine 54. ATP is bound by residues glycine 55 and arginine 59. Residues aspartate 72 and 133–140 contribute to the UMP site; that span reads TGNPYFST. Tyrosine 166 and aspartate 169 together coordinate ATP.

It belongs to the UMP kinase family. As to quaternary structure, homohexamer.

The protein resides in the cytoplasm. It carries out the reaction UMP + ATP = UDP + ADP. It participates in pyrimidine metabolism; CTP biosynthesis via de novo pathway; UDP from UMP (UMPK route): step 1/1. Allosterically activated by GTP. Inhibited by UTP. Catalyzes the reversible phosphorylation of UMP to UDP. This Clostridium perfringens (strain ATCC 13124 / DSM 756 / JCM 1290 / NCIMB 6125 / NCTC 8237 / Type A) protein is Uridylate kinase.